A 213-amino-acid chain; its full sequence is Peptidyl-tRNA hydrolase (213 aa).

Residue Tyr-15 coordinates tRNA. His-20 serves as the catalytic Proton acceptor. TRNA is bound by residues Phe-66, Asn-68, and Asn-114. The tract at residues 187–213 is disordered; it reads HTTKPPRPKPPRPAAAPVDAPAAPGDQ. The span at 201–213 shows a compositional bias: low complexity; it reads AAPVDAPAAPGDQ.

The protein belongs to the PTH family. Monomer.

Its subcellular location is the cytoplasm. It carries out the reaction an N-acyl-L-alpha-aminoacyl-tRNA + H2O = an N-acyl-L-amino acid + a tRNA + H(+). Hydrolyzes ribosome-free peptidyl-tRNAs (with 1 or more amino acids incorporated), which drop off the ribosome during protein synthesis, or as a result of ribosome stalling. Its function is as follows. Catalyzes the release of premature peptidyl moieties from peptidyl-tRNA molecules trapped in stalled 50S ribosomal subunits, and thus maintains levels of free tRNAs and 50S ribosomes. This chain is Peptidyl-tRNA hydrolase, found in Paracidovorax citrulli (strain AAC00-1) (Acidovorax citrulli).